Consider the following 161-residue polypeptide: 6,7-dimethyl-8-ribityllumazine synthase (161 aa).

Residues W26, 58–60, and 81–83 each bind 5-amino-6-(D-ribitylamino)uracil; these read SFE and VVI. 86–87 is a (2S)-2-hydroxy-3-oxobutyl phosphate binding site; the sequence is GT. Residue H89 is the Proton donor of the active site. F114 serves as a coordination point for 5-amino-6-(D-ribitylamino)uracil. (2S)-2-hydroxy-3-oxobutyl phosphate is bound at residue R128.

Belongs to the DMRL synthase family.

The catalysed reaction is (2S)-2-hydroxy-3-oxobutyl phosphate + 5-amino-6-(D-ribitylamino)uracil = 6,7-dimethyl-8-(1-D-ribityl)lumazine + phosphate + 2 H2O + H(+). It participates in cofactor biosynthesis; riboflavin biosynthesis; riboflavin from 2-hydroxy-3-oxobutyl phosphate and 5-amino-6-(D-ribitylamino)uracil: step 1/2. Functionally, catalyzes the formation of 6,7-dimethyl-8-ribityllumazine by condensation of 5-amino-6-(D-ribitylamino)uracil with 3,4-dihydroxy-2-butanone 4-phosphate. This is the penultimate step in the biosynthesis of riboflavin. The sequence is that of 6,7-dimethyl-8-ribityllumazine synthase from Streptomyces coelicolor (strain ATCC BAA-471 / A3(2) / M145).